Consider the following 260-residue polypeptide: Chloride intracellular channel Clic (260 aa).

A helical membrane pass occupies residues 42–66; that stretch reads FCQEYFMDLYLLAELKTISLKVTTV.

It belongs to the chloride channel CLIC family. As to expression, expressed in cardiac tubes.

The protein resides in the mitochondrion. The protein localises to the membrane. Might insert into membranes and form chloride ion channels. Channel activity depends on the pH. May play a role in ethanol sensitivity. This Drosophila melanogaster (Fruit fly) protein is Chloride intracellular channel Clic.